We begin with the raw amino-acid sequence, 124 residues long: Small ribosomal subunit protein eS25 (124 aa).

A compositionally biased stretch (basic and acidic residues) spans 1–22; it reads MPPKDSKQKKDTSKAKKDKDPV. Residues 1 to 37 form a disordered region; sequence MPPKDSKQKKDTSKAKKDKDPVNKSGGKAKKKKWSKG. Basic residues predominate over residues 27-37; it reads GKAKKKKWSKG.

It belongs to the eukaryotic ribosomal protein eS25 family. As to quaternary structure, component of the small ribosomal subunit.

Its subcellular location is the cytoplasm. Functionally, component of the small ribosomal subunit. The ribosome is a large ribonucleoprotein complex responsible for the synthesis of proteins in the cell. The sequence is that of Small ribosomal subunit protein eS25 (rps25) from Ictalurus punctatus (Channel catfish).